We begin with the raw amino-acid sequence, 340 residues long: HTH-type transcriptional regulator VirS (340 aa).

The 99-residue stretch at 236–334 folds into the HTH araC/xylS-type domain; it reads ERVVGLARRL…GMTPRQYRAY (99 aa). 2 DNA-binding regions (H-T-H motif) span residues 254-275 and 301-324; these read EAIA…AAEG and LSQI…RRWF.

In terms of processing, phosphorylated by PknK. Phosphorylation increases affinity for the mymA promoter.

Functionally, regulates the expression of the mymA operon. This chain is HTH-type transcriptional regulator VirS (virS), found in Mycobacterium tuberculosis (strain CDC 1551 / Oshkosh).